A 94-amino-acid chain; its full sequence is PTS system galactitol-specific EIIB component (94 aa).

In terms of domain architecture, PTS EIIB type-2 spans 1–94 (MKRKIIVACG…QNKILTILQG (94 aa)). Cys9 functions as the Phosphocysteine intermediate; for EIIB activity in the catalytic mechanism. Cys9 is subject to Phosphocysteine; by EIIA.

As to quaternary structure, forms a complex with one each of subunit of GatA, GatB and 2 subunits of GatC.

The protein resides in the cytoplasm. It carries out the reaction galactitol(out) + N(pros)-phospho-L-histidyl-[protein] = galactitol 1-phosphate(in) + L-histidyl-[protein]. The phosphoenolpyruvate-dependent sugar phosphotransferase system (PTS), a major carbohydrate active transport system, catalyzes the phosphorylation of incoming sugar substrates concomitant with their translocation across the cell membrane. The enzyme II complex composed of GatA, GatB and GatC is involved in galactitol transport. In Escherichia coli O157:H7, this protein is PTS system galactitol-specific EIIB component (gatB).